Reading from the N-terminus, the 36-residue chain is Ostricacin-1 (36 aa).

Disulfide bonds link cysteine 3–cysteine 29, cysteine 8–cysteine 23, and cysteine 13–cysteine 30.

The protein localises to the secreted. Has antibacterial activity against the Gram-positive bacteria S.aureus 1056 MRSA (MIC=1.25 ug/ml) and S.aureus NCTC 4163 (MIC=6.7 ug/ml), and the Gram-negative bacteria E.coli O157:H7 (MIC=0.96 ug/ml) and E.coli 0111 (MIC=6.7 ug/ml). Does not have antifungal activity against the yeast C.albicans 3153A. This Struthio camelus (Common ostrich) protein is Ostricacin-1.